Consider the following 330-residue polypeptide: Aspartate--ammonia ligase (330 aa).

This sequence belongs to the class-II aminoacyl-tRNA synthetase family. AsnA subfamily.

It localises to the cytoplasm. The catalysed reaction is L-aspartate + NH4(+) + ATP = L-asparagine + AMP + diphosphate + H(+). The protein operates within amino-acid biosynthesis; L-asparagine biosynthesis; L-asparagine from L-aspartate (ammonia route): step 1/1. In Serratia proteamaculans (strain 568), this protein is Aspartate--ammonia ligase.